Consider the following 822-residue polypeptide: Fibroblast growth factor receptor 1 (822 aa).

Positions 1–21 are cleaved as a signal peptide; it reads MWGWKCLLFWAVLVTATLCTA. Topologically, residues 22 to 376 are extracellular; that stretch reads RPAPTLPEQA…AVMTSPLYLE (355 aa). The region spanning 25–119 is the Ig-like C2-type 1 domain; the sequence is PTLPEQAQPW…DTTYFSVNVS (95 aa). Cysteine 55 and cysteine 101 are oxidised to a cystine. Residues asparagine 77 and asparagine 117 are each glycosylated (N-linked (GlcNAc...) asparagine). The tract at residues 120–162 is disordered; sequence DALPSSEDDDDDDDSSSEEKETDNTKPNRRPVAPYWTSPEKME. A compositionally biased stretch (acidic residues) spans 125–135; that stretch reads SEDDDDDDDSS. The span at 136–145 shows a compositional bias: basic and acidic residues; the sequence is SEEKETDNTK. 2 Ig-like C2-type domains span residues 158–246 and 255–357; these read PEKM…YQLD and PILQ…AWLT. A heparin-binding region spans residues 160-177; it reads KMEKKLHAVPAAKTVKFK. Residues cysteine 178 and cysteine 230 are joined by a disulfide bond. Residues asparagine 227, asparagine 240, asparagine 264, asparagine 296, asparagine 317, and asparagine 330 are each glycosylated (N-linked (GlcNAc...) asparagine). Cysteines 277 and 341 form a disulfide. Residues 377-397 form a helical membrane-spanning segment; that stretch reads IIIYCTGAFLISCMLGSVIIY. At 398–822 the chain is on the cytoplasmic side; that stretch reads KMKSGTKKSD…QLANSGLKRR (425 aa). Tyrosine 463 carries the phosphotyrosine; by autocatalysis modification. The Protein kinase domain maps to 478–767; it reads LVLGKPLGEG…VALTSNQEYL (290 aa). ATP contacts are provided by residues 484 to 490, lysine 514, 562 to 564, and asparagine 568; these read LGEGCFG and EYA. Residues tyrosine 583 and tyrosine 585 each carry the phosphotyrosine; by autocatalysis modification. Aspartate 623 (proton acceptor) is an active-site residue. Arginine 627 and aspartate 641 together coordinate ATP. Phosphotyrosine; by autocatalysis occurs at positions 653, 654, 730, and 766. The span at 782–792 shows a compositional bias: polar residues; it reads DTRSSTCSSGE. Residues 782 to 822 form a disordered region; the sequence is DTRSSTCSSGEDSVFSHEPLPEEPCLPRHPTQLANSGLKRR.

This sequence belongs to the protein kinase superfamily. Tyr protein kinase family. Fibroblast growth factor receptor subfamily. In terms of assembly, monomer. Homodimer after ligand binding. Interacts predominantly with FGF1 and FGF2, but can also interact with FGF3, FGF4, FGF5, FGF6, FGF8, FGF10, FGF19, FGF21, FGF22 and FGF23 (in vitro). Ligand specificity is determined by tissue-specific expression of isoforms, and differences in the third Ig-like domain are crucial for ligand specificity. Affinity for fibroblast growth factors (FGFs) is increased by heparan sulfate glycosaminoglycans that function as coreceptors. Likewise, KLB increases the affinity for FGF19, FGF21 and FGF23. Interacts (phosphorylated on Tyr-766) with PLCG1 (via SH2 domains). Interacts with FRS2. Interacts with RPS6KA1. Interacts (via C-terminus) with NEDD4 (via WW3 domain). Interacts with KL. Interacts with SHB (via SH2 domain). Interacts with GRB10. Interacts with ANOS1; this interaction does not interfere with FGF2-binding to FGFR1, but prevents binding of heparin-bound FGF2. Interacts with SOX2 and SOX3. Interacts with FLRT1, FLRT2 and FLRT3. Found in a ternary complex with FGF1 and ITGAV:ITGB3. In terms of processing, autophosphorylated. Binding of FGF family members together with heparan sulfate proteoglycan or heparin promotes receptor dimerization and autophosphorylation on tyrosine residues. Autophosphorylation occurs in trans between the two FGFR molecules present in the dimer and proceeds in a highly ordered manner. Initial autophosphorylation at Tyr-653 increases the kinase activity by a factor of 50 to 100. After this, Tyr-583 becomes phosphorylated, followed by phosphorylation of Tyr-463, Tyr-766, Tyr-583 and Tyr-585. In a third stage, Tyr-654 is autophosphorylated, resulting in a further tenfold increase of kinase activity. Phosphotyrosine residues provide docking sites for interacting proteins and so are crucial for FGFR1 function and its regulation. Post-translationally, ubiquitinated. FGFR1 is rapidly ubiquitinated by NEDD4 after autophosphorylation, leading to internalization and lysosomal degradation. CBL is recruited to activated FGFR1 via FRS2 and GRB2, and mediates ubiquitination and subsequent degradation of FGFR1. N-glycosylated in the endoplasmic reticulum. The N-glycan chains undergo further maturation to an Endo H-resistant form in the Golgi apparatus. Widely expressed.

Its subcellular location is the cell membrane. It localises to the nucleus. It is found in the cytoplasm. The protein resides in the cytosol. The protein localises to the cytoplasmic vesicle. The enzyme catalyses L-tyrosyl-[protein] + ATP = O-phospho-L-tyrosyl-[protein] + ADP + H(+). Present in an inactive conformation in the absence of bound ligand. Ligand binding leads to dimerization and activation by sequential autophosphorylation on tyrosine residues. Its function is as follows. Tyrosine-protein kinase that acts as a cell-surface receptor for fibroblast growth factors and plays an essential role in the regulation of embryonic development, cell proliferation, differentiation and migration. Required for normal mesoderm patterning and correct axial organization during embryonic development, normal skeletogenesis and normal development of the gonadotropin-releasing hormone (GnRH) neuronal system. Phosphorylates PLCG1, FRS2, GAB1 and SHB. Ligand binding leads to the activation of several signaling cascades. Activation of PLCG1 leads to the production of the cellular signaling molecules diacylglycerol and inositol 1,4,5-trisphosphate. Phosphorylation of FRS2 triggers recruitment of GRB2, GAB1, PIK3R1 and SOS1, and mediates activation of RAS, MAPK1/ERK2, MAPK3/ERK1 and the MAP kinase signaling pathway, as well as of the AKT1 signaling pathway. Promotes phosphorylation of SHC1, STAT1 and PTPN11/SHP2. In the nucleus, enhances RPS6KA1 and CREB1 activity and contributes to the regulation of transcription. FGFR1 signaling is down-regulated by IL17RD/SEF, and by FGFR1 ubiquitination, internalization and degradation. The protein is Fibroblast growth factor receptor 1 (Fgfr1) of Mus musculus (Mouse).